We begin with the raw amino-acid sequence, 361 residues long: Phospho-N-acetylmuramoyl-pentapeptide-transferase (361 aa).

10 helical membrane-spanning segments follow: residues 21–41, 72–92, 94–114, 135–155, 169–189, 200–220, 240–260, 263–283, 289–309, and 338–358; these read YITF…FVIG, TPTM…LLWV, LANV…LIGF, LAWT…VTPH, LLVN…VGAS, GLAI…AYLS, LAVF…FNAP, MVFM…AVSV, LVLA…MVQV, and TVVI…LSTL.

It belongs to the glycosyltransferase 4 family. MraY subfamily. It depends on Mg(2+) as a cofactor.

The protein resides in the cell inner membrane. It carries out the reaction UDP-N-acetyl-alpha-D-muramoyl-L-alanyl-gamma-D-glutamyl-meso-2,6-diaminopimeloyl-D-alanyl-D-alanine + di-trans,octa-cis-undecaprenyl phosphate = di-trans,octa-cis-undecaprenyl diphospho-N-acetyl-alpha-D-muramoyl-L-alanyl-D-glutamyl-meso-2,6-diaminopimeloyl-D-alanyl-D-alanine + UMP. The protein operates within cell wall biogenesis; peptidoglycan biosynthesis. Its function is as follows. Catalyzes the initial step of the lipid cycle reactions in the biosynthesis of the cell wall peptidoglycan: transfers peptidoglycan precursor phospho-MurNAc-pentapeptide from UDP-MurNAc-pentapeptide onto the lipid carrier undecaprenyl phosphate, yielding undecaprenyl-pyrophosphoryl-MurNAc-pentapeptide, known as lipid I. In Rhodospirillum centenum (strain ATCC 51521 / SW), this protein is Phospho-N-acetylmuramoyl-pentapeptide-transferase.